Reading from the N-terminus, the 708-residue chain is Serine/threonine-protein kinase Nek5 (708 aa).

In terms of domain architecture, Protein kinase spans 4–259 (YDVIKAIGQG…INSILKRPFL (256 aa)). ATP contacts are provided by residues 10–18 (IGQGAFGKA) and K33. D128 serves as the catalytic Proton acceptor. 2 disordered regions span residues 376-403 (SYHPIPQENTGVEDYGQETRHGPSPSQW) and 423-454 (KQLGLRPSSAEPNYNQRQELRSNGEEPRFQEL). Residues 440-454 (QELRSNGEEPRFQEL) are compositionally biased toward basic and acidic residues.

The protein belongs to the protein kinase superfamily. NEK Ser/Thr protein kinase family. NIMA subfamily. Mg(2+) is required as a cofactor.

The protein resides in the cell projection. Its subcellular location is the cilium. The protein localises to the flagellum. The catalysed reaction is L-seryl-[protein] + ATP = O-phospho-L-seryl-[protein] + ADP + H(+). The enzyme catalyses L-threonyl-[protein] + ATP = O-phospho-L-threonyl-[protein] + ADP + H(+). The chain is Serine/threonine-protein kinase Nek5 (NEK5) from Homo sapiens (Human).